The following is a 448-amino-acid chain: MFVDEVINNLKGNEFLNTTLLTKSNKNKLYYAVKQPDGNIKVVLPFVFENKNFLKLSEYKDGIEGATQRVIEEIKQEIIKKKRFLPLAGYFGRIYKALYEPLTVVNCNLNLGYDLWKVDKYNYIEGDKIYLMLRMIFKEKDSKEIVKQINELCNDLDKFIKKIPIDLLIDEAKNIINQKYLRDKLDELGLVCFIANNSKPARKYTEVRRHYRIAGPKDVNIPFECPEELEPIEIELKYGKKVKGLGIKKKEIFIITGRNAQGKTTLLQAIDSGRDDHLIGDGREFIITTKSLSKASTGSMEMSGQDISLFFQKLPPGIKGSPKAVYGTASGSMYMAYQIQRAIKNKTKLILIDEDNSAVNLLVSGVLSKWFEGVKSLAEIIMEDREKLGDSSFIIVTSSLDLLTALGDRAIYLEDHKAKYLDLTYFREELGRYYLELASKFIGVKIRE.

257 to 264 contributes to the ATP binding site; sequence GRNAQGKT.

This is an uncharacterized protein from Methanocaldococcus jannaschii (strain ATCC 43067 / DSM 2661 / JAL-1 / JCM 10045 / NBRC 100440) (Methanococcus jannaschii).